The chain runs to 78 residues: Putative membrane protein insertion efficiency factor (78 aa).

It belongs to the UPF0161 family.

The protein resides in the cell membrane. Its function is as follows. Could be involved in insertion of integral membrane proteins into the membrane. This is Putative membrane protein insertion efficiency factor from Bacillus thuringiensis subsp. konkukian (strain 97-27).